A 797-amino-acid polypeptide reads, in one-letter code: Xaa-Pro dipeptidyl-peptidase (797 aa).

Catalysis depends on charge relay system residues Ser-370, Asp-490, and His-521.

It belongs to the peptidase S15 family. In terms of assembly, homodimer.

The protein localises to the cytoplasm. The enzyme catalyses Hydrolyzes Xaa-Pro-|- bonds to release unblocked, N-terminal dipeptides from substrates including Ala-Pro-|-p-nitroanilide and (sequentially) Tyr-Pro-|-Phe-Pro-|-Gly-Pro-|-Ile.. In terms of biological role, removes N-terminal dipeptides sequentially from polypeptides having unsubstituted N-termini provided that the penultimate residue is proline. This chain is Xaa-Pro dipeptidyl-peptidase, found in Lacticaseibacillus casei (strain BL23) (Lactobacillus casei).